Here is a 518-residue protein sequence, read N- to C-terminus: GTPase MTG2, mitochondrial (518 aa).

Residues 1–23 (MSIAWSSVFKRELRLERFLPRVY) constitute a mitochondrion transit peptide. Residues 89–339 (GNFVDVRIVK…QHFLFELKSI (251 aa)) enclose the Obg domain. Residues 340–512 (ADLGLIGLPN…LKKKMFKCAR (173 aa)) enclose the OBG-type G domain. Residues 346-353 (GLPNAGKS), 394-398 (DIPGI), and 460-463 (NKVD) contribute to the GTP site.

The protein belongs to the TRAFAC class OBG-HflX-like GTPase superfamily. OBG GTPase family. As to quaternary structure, interacts with the mitochondrial 54S large ribosomal subunit.

Its subcellular location is the mitochondrion inner membrane. Functionally, required for mitochondrial protein synthesis. May be involved in mitochondrial ribosome biogenesis. The sequence is that of GTPase MTG2, mitochondrial (MTG2) from Saccharomyces cerevisiae (strain ATCC 204508 / S288c) (Baker's yeast).